We begin with the raw amino-acid sequence, 252 residues long: Oncostatin-M (252 aa).

Positions 1–25 (MGVLLTQRTLLSLVLALLFPSMASM) are cleaved as a signal peptide. 2 cysteine pairs are disulfide-bonded: Cys31–Cys152 and Cys74–Cys192. Asn100 carries an N-linked (GlcNAc...) asparagine glycan. 2 disordered regions span residues 162 to 184 (TAEP…ASDA) and 213 to 252 (GESP…QLPR). N-linked (GlcNAc...) asparagine glycosylation occurs at Asn217. The span at 218 to 245 (RSRRHSPHQALRKGVRRTRPSRKGKRLM) shows a compositional bias: basic residues. A propeptide spanning residues 222 to 252 (HSPHQALRKGVRRTRPSRKGKRLMTRGQLPR) is cleaved from the precursor.

Belongs to the LIF/OSM family. Propeptide processing is not important for receptor binding activity but may be important growth-inhibitory activity.

It localises to the secreted. Its function is as follows. Growth regulator. Inhibits the proliferation of a number of tumor cell lines. Stimulates proliferation of AIDS-KS cells. It regulates cytokine production, including IL-6, G-CSF and GM-CSF from endothelial cells. Uses both type I OSM receptor (heterodimers composed of LIFR and IL6ST) and type II OSM receptor (heterodimers composed of OSMR and IL6ST). Involved in the maturation of fetal hepatocytes, thereby promoting liver development and regeneration. This chain is Oncostatin-M (OSM), found in Homo sapiens (Human).